The chain runs to 221 residues: Translation initiation factor 6 (221 aa).

This sequence belongs to the eIF-6 family.

Functionally, binds to the 50S ribosomal subunit and prevents its association with the 30S ribosomal subunit to form the 70S initiation complex. This chain is Translation initiation factor 6, found in Cenarchaeum symbiosum (strain A).